A 303-amino-acid polypeptide reads, in one-letter code: uncharacterized protein (303 aa).

The next 4 membrane-spanning stretches (helical) occupy residues 102–122, 132–152, 184–204, and 221–241; these read TYLLSIIMMVLLCMLPSVMAI, FVLFDDIFILITFILIPFLFF, LLYFFFLLLWVPQGFLQSLIY, and FILLGIDLIFILFAIWNFLLF.

The protein resides in the membrane. This is an uncharacterized protein from Dictyostelium discoideum (Social amoeba).